We begin with the raw amino-acid sequence, 432 residues long: Luc7-like protein 3 (432 aa).

An N-acetylmethionine modification is found at M1. A phosphoserine mark is found at S3, S110, and S115. A coiled-coil region spans residues K124–S181. An N6-acetyllysine modification is found at K231. The span at L234–R287 shows a compositional bias: basic and acidic residues. The segment at L234–N432 is disordered. Residues E288 to S301 show a composition bias toward basic residues. Positions R302 to S311 are enriched in basic and acidic residues. The segment covering R312–S367 has biased composition (basic residues). Over residues R368 to N414 the composition is skewed to basic and acidic residues. A Phosphoserine modification is found at S420. Basic and acidic residues predominate over residues E421–N432. A Glycyl lysine isopeptide (Lys-Gly) (interchain with G-Cter in SUMO1); alternate cross-link involves residue K424. A Glycyl lysine isopeptide (Lys-Gly) (interchain with G-Cter in SUMO2); alternate cross-link involves residue K424. Phosphoserine is present on residues S425 and S431.

This sequence belongs to the Luc7 family. May interact with SFRS1 and form homodimers. Interacts with JMJD6. Interacts with RBM25. Interacts with RSRC1 (via Arg/Ser-rich domain). Interacts with RRP1B. In terms of processing, phosphorylated in vitro by SRPK1, SRPK2 and CLK1. In terms of tissue distribution, widely expressed. Highest levels in heart, brain, pancreas, thymus, ovary, small intestine and peripheral blood leukocytes, as well as cerebellum, putamen and pituitary gland. Lowest levels in lung, liver and kidney. Also expressed in fetal tissues, including brain, heart, kidney, thymus and lung.

It localises to the nucleus speckle. Its function is as follows. Binds cAMP regulatory element DNA sequence. May play a role in RNA splicing. In Homo sapiens (Human), this protein is Luc7-like protein 3 (LUC7L3).